The primary structure comprises 498 residues: AP2-like ethylene-responsive transcription factor AIL7 (498 aa).

Over residues threonine 186 to asparagine 195 the composition is skewed to polar residues. A disordered region spans residues threonine 186–lysine 220. Basic and acidic residues predominate over residues serine 209–lysine 220. 2 consecutive DNA-binding regions (AP2/ERF) follow at residues isoleucine 231–proline 297 and isoleucine 333–glutamate 391. Residues glutamate 422 to serine 451 show a composition bias toward low complexity. The segment at glutamate 422–isoleucine 452 is disordered.

This sequence belongs to the AP2/ERF transcription factor family. AP2 subfamily. As to quaternary structure, interacts with HDG2, and possibly with HDG3, HDG7, ANL2, ATML1 and PDF2. Expressed in roots, seedlings, inflorescence, and siliques. Also detected at low levels in leaves.

The protein localises to the nucleus. Functionally, probably acts as a transcriptional activator. Binds to the GCC-box pathogenesis-related promoter element. May be involved in the regulation of gene expression by stress factors and by components of stress signal transduction pathways. The chain is AP2-like ethylene-responsive transcription factor AIL7 from Arabidopsis thaliana (Mouse-ear cress).